Here is an 88-residue protein sequence, read N- to C-terminus: Small ribosomal subunit protein bS18B (88 aa).

This sequence belongs to the bacterial ribosomal protein bS18 family. Part of the 30S ribosomal subunit. Forms a tight heterodimer with protein bS6.

In terms of biological role, binds as a heterodimer with protein bS6 to the central domain of the 16S rRNA, where it helps stabilize the platform of the 30S subunit. This is Small ribosomal subunit protein bS18B from Mycolicibacterium paratuberculosis (strain ATCC BAA-968 / K-10) (Mycobacterium paratuberculosis).